The following is a 514-amino-acid chain: Pentatricopeptide repeat-containing protein At4g26800 (514 aa).

11 PPR repeats span residues 122–156 (DLYT…GIEP), 157–191 (DIVT…GIKR), 192–226 (DVVV…GISP), 227–261 (NVVT…KINP), 262–296 (NVIT…SIDP), 297–331 (NVFT…GCTP), 332–366 (NVVT…GVAA), 367–401 (NTVS…GLIP), 402–436 (NIRS…RNDL), 437–471 (DIIT…RVEP), and 472–510 (DFKA…ESAP).

This sequence belongs to the PPR family. P subfamily.

This chain is Pentatricopeptide repeat-containing protein At4g26800, found in Arabidopsis thaliana (Mouse-ear cress).